The following is a 251-amino-acid chain: uncharacterized protein (251 aa).

The Response regulatory domain occupies 3 to 118; it reads KVIICDDERI…QLEHILDILV (116 aa). Aspartate 55 carries the post-translational modification 4-aspartylphosphate. One can recognise an HTH araC/xylS-type domain in the interval 152 to 249; that stretch reads NQILSQIKQH…HMSPSDYNKQ (98 aa). 2 consecutive DNA-binding regions (H-T-H motif) follow at residues 169-190 and 216-239; these read LDLINPIDVSESYAMRTFKEHV and HYEIAEKVGFSEYKMFCYHFKKYL.

Phosphorylated by SERP2405.

It is found in the cytoplasm. Functionally, probable member of the two-component regulatory system SERP2405/SERP2406. This is an uncharacterized protein from Staphylococcus epidermidis (strain ATCC 35984 / DSM 28319 / BCRC 17069 / CCUG 31568 / BM 3577 / RP62A).